A 511-amino-acid chain; its full sequence is Ribose import ATP-binding protein RbsA (511 aa).

ABC transporter domains follow at residues 7–242 and 256–500; these read LQIS…VGRE and CSTT…SGTQ. 39–46 contributes to the ATP binding site; the sequence is GENGAGKS.

This sequence belongs to the ABC transporter superfamily. Ribose importer (TC 3.A.1.2.1) family. The complex is composed of an ATP-binding protein (RbsA), two transmembrane proteins (RbsC) and a solute-binding protein (RbsB).

The protein localises to the cell inner membrane. The enzyme catalyses D-ribose(out) + ATP + H2O = D-ribose(in) + ADP + phosphate + H(+). In terms of biological role, part of the ABC transporter complex RbsABC involved in ribose import. Responsible for energy coupling to the transport system. The chain is Ribose import ATP-binding protein RbsA from Ruegeria sp. (strain TM1040) (Silicibacter sp.).